The primary structure comprises 495 residues: Leucine aminopeptidase 2 (495 aa).

The first 21 residues, 1–21 (MKSQLLSLAVAVTTISQGVVG), serve as a signal peptide directing secretion. The region spanning 124 to 218 (PPASKIMAEL…EDGKNLATLV (95 aa)) is the PA domain. N-linked (GlcNAc...) asparagine glycans are attached at residues N142 and N235. Residues H259 and D271 each contribute to the Zn(2+) site. A glycan (N-linked (GlcNAc...) asparagine) is linked at N272. The active-site Proton acceptor is the E303. Positions 304 and 332 each coordinate Zn(2+). N-linked (GlcNAc...) asparagine glycosylation occurs at N352. Residue H430 participates in Zn(2+) binding.

It belongs to the peptidase M28 family. M28A subfamily. Monomer. Zn(2+) serves as cofactor.

Its subcellular location is the secreted. Its activity is regulated as follows. Activity is inhibited by EDTA, o-phenanthroline, bestatin and amastatin. In terms of biological role, extracellular aminopeptidase that releases a wide variety of amino acids from natural peptides and contributes to pathogenicity. This Trichophyton rubrum (Athlete's foot fungus) protein is Leucine aminopeptidase 2 (LAP2).